The sequence spans 67 residues: Large ribosomal subunit protein uL29 (67 aa).

This sequence belongs to the universal ribosomal protein uL29 family.

This Moorella thermoacetica (strain ATCC 39073 / JCM 9320) protein is Large ribosomal subunit protein uL29.